Reading from the N-terminus, the 144-residue chain is Probable nucleoside diphosphate kinase 5 (144 aa).

ATP contacts are provided by Lys3, Phe51, Arg79, Thr85, Arg99, and Asn109. Catalysis depends on His112, which acts as the Pros-phosphohistidine intermediate.

Belongs to the NDK family.

The enzyme catalyses a 2'-deoxyribonucleoside 5'-diphosphate + ATP = a 2'-deoxyribonucleoside 5'-triphosphate + ADP. It carries out the reaction a ribonucleoside 5'-diphosphate + ATP = a ribonucleoside 5'-triphosphate + ADP. Its function is as follows. Involved in the synthesis of nucleoside triphosphates other than ATP. The ATP gamma phosphate is transferred to the NDP beta phosphate via a ping-pong mechanism, using a phosphorylated active-site intermediate. In Arabidopsis thaliana (Mouse-ear cress), this protein is Probable nucleoside diphosphate kinase 5.